A 520-amino-acid chain; its full sequence is Probable E3 ubiquitin-protein ligase XBOS33 (520 aa).

ANK repeat units lie at residues 44 to 73, 77 to 106, 111 to 140, 185 to 214, and 228 to 258; these read GLNS…DVNV, CGQT…NVTR, SGRT…PSAP, GGVT…NVSA, and AGST…KLTL. Residues 327–377 form an RING-type zinc finger; the sequence is CAVCLERSCSVAAEGCCHEFCIKCALYLCSTSNTRVEFTGPPGSIPCPLCR. Over residues 467 to 479 the composition is skewed to polar residues; that stretch reads QDGSEVQSPQPSH. The disordered stretch occupies residues 467-493; the sequence is QDGSEVQSPQPSHCASMEMDKREQQDL. A compositionally biased stretch (basic and acidic residues) spans 484-493; it reads EMDKREQQDL.

It carries out the reaction S-ubiquitinyl-[E2 ubiquitin-conjugating enzyme]-L-cysteine + [acceptor protein]-L-lysine = [E2 ubiquitin-conjugating enzyme]-L-cysteine + N(6)-ubiquitinyl-[acceptor protein]-L-lysine.. It participates in protein modification; protein ubiquitination. The sequence is that of Probable E3 ubiquitin-protein ligase XBOS33 (XBOS33) from Oryza sativa subsp. japonica (Rice).